Here is a 517-residue protein sequence, read N- to C-terminus: MENFQGYLEKYEFCQHQCLYPLLFQEYIYALAYDYDLNTCLFSESVDELISYDNKYSSVLVKRLITRMYQQNYLINSVNHSKFNSFIANNHFFYSHFYSQMISEGFGIILEIPFSLEFLSFSKRKKRLKLQNLRSIHSIFSFLEDKLLXFHXMSDILIPYPIHFEILIQILQYWIQDISFLHLVRFFFFEYLNWNTLITSKNWVSIFLKENQRLFRFLYNSYVSEYEFVFLFLSTKSSYLRFTSFGIFLERIYFYGKIKHFRIVYVTSLQRTLWFFTDSFIHYVRYQGKAILSSRGTFLLMKKWKSYLVCFWQYYFHFWFQPNRILINQFFNYSFYFFGYLLSLKKNHLVVRGQILENSVLIDTMNNQLDTIVPVIXLIRSLSIATFXTXSGHPISKPIWADLSDRDILTRFGRISRNLFHYYSGSSKKWGLYRIKFILRLSCARTLARKHKSTVRTFMQKLGGMFLEEFFTEEEQVLSLVFQKIIHFSLHRSNRERIWYLDIIRINDLVNYFELRS.

This sequence belongs to the intron maturase 2 family. MatK subfamily.

It is found in the plastid. It localises to the chloroplast. Its function is as follows. Usually encoded in the trnK tRNA gene intron. Probably assists in splicing its own and other chloroplast group II introns. The protein is Maturase K of Juncus effusus (Soft rush).